Reading from the N-terminus, the 546-residue chain is Probable protein kinase UbiB (546 aa).

One can recognise a Protein kinase domain in the interval 124-502 (DFDIQPLASA…HVRQSQSRYL (379 aa)). ATP is bound by residues 130–138 (LASASIAQV) and lysine 153. Aspartate 288 serves as the catalytic Proton acceptor. Helical transmembrane passes span 501–521 (YLLGIGATLLLSGSFLLVNRP) and 522–542 (EWGLMPGWLMVGGVVVWLVGW).

The protein belongs to the ABC1 family. UbiB subfamily.

The protein localises to the cell inner membrane. It participates in cofactor biosynthesis; ubiquinone biosynthesis [regulation]. Functionally, is probably a protein kinase regulator of UbiI activity which is involved in aerobic coenzyme Q (ubiquinone) biosynthesis. The polypeptide is Probable protein kinase UbiB (Salmonella enteritidis PT4 (strain P125109)).